Here is a 448-residue protein sequence, read N- to C-terminus: T-box transcription factor T homolog 1 (448 aa).

The T-box DNA-binding region spans 54 to 224; it reads LWDKFNALTN…YNPFAKAFLD (171 aa). Disordered stretches follow at residues 290–312 and 401–448; these read APYP…TAAS and TTAS…PPSL. Over residues 417–442 the composition is skewed to polar residues; sequence STDSGYGHSTTPPAPQTRITSNNWSP.

Its subcellular location is the nucleus. Its function is as follows. Involved in the transcriptional regulation of genes required for mesoderm formation and differentiation. This Branchiostoma floridae (Florida lancelet) protein is T-box transcription factor T homolog 1.